The sequence spans 137 residues: Large ribosomal subunit protein uL16c (137 aa).

Belongs to the universal ribosomal protein uL16 family. Part of the 50S ribosomal subunit.

It is found in the plastid. It localises to the chloroplast. The polypeptide is Large ribosomal subunit protein uL16c (Vigna unguiculata (Cowpea)).